The sequence spans 404 residues: CCA-adding enzyme (404 aa).

Positions 27 and 30 each coordinate ATP. Positions 27 and 30 each coordinate CTP. Mg(2+)-binding residues include Asp40 and Asp42. Positions 111, 154, 157, 160, and 163 each coordinate ATP. Arg111, Asp154, Arg157, Arg160, and Arg163 together coordinate CTP.

This sequence belongs to the tRNA nucleotidyltransferase/poly(A) polymerase family. Bacterial CCA-adding enzyme type 3 subfamily. Homodimer. It depends on Mg(2+) as a cofactor.

The catalysed reaction is a tRNA precursor + 2 CTP + ATP = a tRNA with a 3' CCA end + 3 diphosphate. The enzyme catalyses a tRNA with a 3' CCA end + 2 CTP + ATP = a tRNA with a 3' CCACCA end + 3 diphosphate. Its function is as follows. Catalyzes the addition and repair of the essential 3'-terminal CCA sequence in tRNAs without using a nucleic acid template. Adds these three nucleotides in the order of C, C, and A to the tRNA nucleotide-73, using CTP and ATP as substrates and producing inorganic pyrophosphate. tRNA 3'-terminal CCA addition is required both for tRNA processing and repair. Also involved in tRNA surveillance by mediating tandem CCA addition to generate a CCACCA at the 3' terminus of unstable tRNAs. While stable tRNAs receive only 3'-terminal CCA, unstable tRNAs are marked with CCACCA and rapidly degraded. The chain is CCA-adding enzyme from Geobacillus kaustophilus (strain HTA426).